The sequence spans 205 residues: Adenylyl-sulfate kinase (205 aa).

31–38 is a binding site for ATP; it reads GLSGAGKS. Residue S105 is the Phosphoserine intermediate of the active site.

Belongs to the APS kinase family.

The enzyme catalyses adenosine 5'-phosphosulfate + ATP = 3'-phosphoadenylyl sulfate + ADP + H(+). The protein operates within sulfur metabolism; hydrogen sulfide biosynthesis; sulfite from sulfate: step 2/3. In terms of biological role, catalyzes the synthesis of activated sulfate. The protein is Adenylyl-sulfate kinase of Shewanella denitrificans (strain OS217 / ATCC BAA-1090 / DSM 15013).